Here is a 118-residue protein sequence, read N- to C-terminus: Class I hydrophobin 1 (118 aa).

An N-terminal signal peptide occupies residues 1-20 (MFARLSTALLAFTLATAVVA). 4 disulfides stabilise this stretch: Cys34/Cys97, Cys41/Cys91, Cys42/Cys77, and Cys98/Cys111. Asn54 is a glycosylation site (N-linked (GlcNAc...) asparagine). Asn115 carries an N-linked (GlcNAc...) asparagine glycan.

Belongs to the fungal hydrophobin family. Self-assembles to form functional amyloid fibrils called rodlets. Self-assembly into fibrillar rodlets occurs spontaneously at hydrophobic:hydrophilic interfaces and the rodlets further associate laterally to form amphipathic monolayers.

Its subcellular location is the secreted. It localises to the cell wall. Functionally, aerial growth, conidiation, and dispersal of filamentous fungi in the environment rely upon a capability of their secreting small amphipathic proteins called hydrophobins (HPBs) with low sequence identity. Class I can self-assemble into an outermost layer of rodlet bundles on aerial cell surfaces, conferring cellular hydrophobicity that supports fungal growth, development and dispersal; whereas Class II form highly ordered films at water-air interfaces through intermolecular interactions but contribute nothing to the rodlet structure. The protein is Class I hydrophobin 1 of Coprinopsis cinerea (strain Okayama-7 / 130 / ATCC MYA-4618 / FGSC 9003) (Inky cap fungus).